Reading from the N-terminus, the 471-residue chain is V-type ATP synthase beta chain (471 aa).

It belongs to the ATPase alpha/beta chains family.

Produces ATP from ADP in the presence of a proton gradient across the membrane. The V-type beta chain is a regulatory subunit. In Streptococcus pyogenes serotype M18 (strain MGAS8232), this protein is V-type ATP synthase beta chain.